Reading from the N-terminus, the 485-residue chain is GTPase Obg (485 aa).

Positions 2-159 constitute an Obg domain; it reads PRFVDRVVIH…RELTLELKTV (158 aa). The 182-residue stretch at 160 to 341 folds into the OBG-type G domain; that stretch reads ADVGLIGFPS…FIFALWDMVR (182 aa). Residues 166–173, 191–195, 212–215, 292–295, and 322–324 each bind GTP; these read GFPSAGKS, FTTLV, DVPG, NKID, and STV. Ser173 and Thr193 together coordinate Mg(2+). The OCT domain occupies 359–437; sequence PIAVDETGFS…IGDMTFDWEP (79 aa). Residues 439–485 form a disordered region; it reads TPAGVDVQMSGRGTDTRLEQTDRVSAAERKIARRERRQSTDEPGGEE. A compositionally biased stretch (basic and acidic residues) spans 452-468; the sequence is TDTRLEQTDRVSAAERK.

This sequence belongs to the TRAFAC class OBG-HflX-like GTPase superfamily. OBG GTPase family. In terms of assembly, monomer. The cofactor is Mg(2+).

It is found in the cytoplasm. An essential GTPase which binds GTP, GDP and possibly (p)ppGpp with moderate affinity, with high nucleotide exchange rates and a fairly low GTP hydrolysis rate. Plays a role in control of the cell cycle, stress response, ribosome biogenesis and in those bacteria that undergo differentiation, in morphogenesis control. The polypeptide is GTPase Obg (Mycobacterium sp. (strain MCS)).